The following is a 359-amino-acid chain: 3-dehydroquinate synthase (359 aa).

NAD(+)-binding positions include 72-77 (EGEIHK), 106-110 (GVIGD), 130-131 (TS), Lys143, Lys152, and 170-173 (CLKT). Zn(2+) contacts are provided by Glu185, His248, and His264.

Belongs to the sugar phosphate cyclases superfamily. Dehydroquinate synthase family. Co(2+) serves as cofactor. It depends on Zn(2+) as a cofactor. The cofactor is NAD(+).

It localises to the cytoplasm. The catalysed reaction is 7-phospho-2-dehydro-3-deoxy-D-arabino-heptonate = 3-dehydroquinate + phosphate. It functions in the pathway metabolic intermediate biosynthesis; chorismate biosynthesis; chorismate from D-erythrose 4-phosphate and phosphoenolpyruvate: step 2/7. Catalyzes the conversion of 3-deoxy-D-arabino-heptulosonate 7-phosphate (DAHP) to dehydroquinate (DHQ). The polypeptide is 3-dehydroquinate synthase (Dehalococcoides mccartyi (strain ATCC BAA-2266 / KCTC 15142 / 195) (Dehalococcoides ethenogenes (strain 195))).